The sequence spans 170 residues: MSVLQVLHYPDERLRKIAAPVKEVNGEIQRIVDDMFETMYAEEGIGLAATQVDVHLQIIVIDVSENRDQRLVLINPELLEKSGETGIEEGCLSIPEQRALVPRAEKVKIRALDRDGKPFELEADDLLAICIQHEMDHLVGKLFVDYLSPLKRQRIRQKLEKMAKLNARAN.

2 residues coordinate Fe cation: Cys91 and His133. Glu134 is a catalytic residue. His137 lines the Fe cation pocket.

The protein belongs to the polypeptide deformylase family. Fe(2+) is required as a cofactor.

It carries out the reaction N-terminal N-formyl-L-methionyl-[peptide] + H2O = N-terminal L-methionyl-[peptide] + formate. Its function is as follows. Removes the formyl group from the N-terminal Met of newly synthesized proteins. Requires at least a dipeptide for an efficient rate of reaction. N-terminal L-methionine is a prerequisite for activity but the enzyme has broad specificity at other positions. In Yersinia enterocolitica serotype O:8 / biotype 1B (strain NCTC 13174 / 8081), this protein is Peptide deformylase.